A 671-amino-acid chain; its full sequence is Protein cereblon (671 aa).

The segment covering 1–11 (MDGEEAADIDE) has biased composition (acidic residues). Disordered regions lie at residues 1 to 59 (MDGE…VDGD), 104 to 130 (LTGT…PAQP), and 150 to 187 (GHNV…DAEA). Low complexity-rich tracts occupy residues 39-51 (QQQQ…SSGE) and 105-115 (TGTTTPTPTAP). Over residues 162–173 (SISSRHSGSDMS) the composition is skewed to polar residues. The 229-residue stretch at 309–537 (RMLIFMHQHI…IIGSTLKQES (229 aa)) folds into the Lon N-terminal domain. A CULT domain is found at 536–645 (ESLFYCRYCN…LAGSSVRIGK (110 aa)). 4 residues coordinate Zn(2+): Cys541, Cys544, Cys610, and Cys613.

The protein belongs to the CRBN family. As to quaternary structure, likely a component of a DCX (DDB1-CUL4-X-box) protein ligase complex. May interact with pic/DDB1. Ubiquitinated.

It is found in the nucleus. It participates in protein modification; protein ubiquitination. Substrate recognition component of a DCX (DDB1-CUL4-X-box) E3 protein ligase complex that mediates the ubiquitination and subsequent proteasomal degradation of target proteins. Has an essential role in mediating growth by negatively regulating insulin signaling. It also has a role in maintaining presynaptic function in the neuromuscular junction synapses of third-instar larvae. The sequence is that of Protein cereblon from Drosophila grimshawi (Hawaiian fruit fly).